The primary structure comprises 382 residues: 1-deoxy-D-xylulose 5-phosphate reductoisomerase (382 aa).

The NADPH site is built by T10, G11, S12, I13, G36, and N122. K123 contributes to the 1-deoxy-D-xylulose 5-phosphate binding site. Position 124 (E124) interacts with NADPH. Residue D148 coordinates Mn(2+). Residues S149, E150, S174, and H197 each coordinate 1-deoxy-D-xylulose 5-phosphate. E150 contributes to the Mn(2+) binding site. NADPH is bound at residue G203. Residues S210, N215, K216, and E219 each coordinate 1-deoxy-D-xylulose 5-phosphate. E219 contacts Mn(2+).

This sequence belongs to the DXR family. The cofactor is Mg(2+). It depends on Mn(2+) as a cofactor.

It carries out the reaction 2-C-methyl-D-erythritol 4-phosphate + NADP(+) = 1-deoxy-D-xylulose 5-phosphate + NADPH + H(+). It participates in isoprenoid biosynthesis; isopentenyl diphosphate biosynthesis via DXP pathway; isopentenyl diphosphate from 1-deoxy-D-xylulose 5-phosphate: step 1/6. Functionally, catalyzes the NADPH-dependent rearrangement and reduction of 1-deoxy-D-xylulose-5-phosphate (DXP) to 2-C-methyl-D-erythritol 4-phosphate (MEP). This chain is 1-deoxy-D-xylulose 5-phosphate reductoisomerase, found in Chlorobium phaeobacteroides (strain BS1).